A 149-amino-acid chain; its full sequence is Ribosome-binding factor A (149 aa).

Basic and acidic residues predominate over residues 116–125 (TLFEELHPNP). The segment at 116–149 (TLFEELHPNPEEDDGDTDAETLLEDSESGIERET) is disordered. Residues 126–143 (EEDDGDTDAETLLEDSES) are compositionally biased toward acidic residues.

The protein belongs to the RbfA family. Monomer. Binds 30S ribosomal subunits, but not 50S ribosomal subunits or 70S ribosomes.

It is found in the cytoplasm. Its function is as follows. One of several proteins that assist in the late maturation steps of the functional core of the 30S ribosomal subunit. Associates with free 30S ribosomal subunits (but not with 30S subunits that are part of 70S ribosomes or polysomes). Required for efficient processing of 16S rRNA. May interact with the 5'-terminal helix region of 16S rRNA. This Leptospira biflexa serovar Patoc (strain Patoc 1 / Ames) protein is Ribosome-binding factor A.